A 190-amino-acid polypeptide reads, in one-letter code: Prostaglandin-H2 D-isomerase (190 aa).

The first 22 residues, 1 to 22, serve as a signal peptide directing secretion; that stretch reads MATHHTLWMGLALLGVLGDLQA. A glycan (N-linked (GlcNAc...) asparagine) is linked at asparagine 51. Cysteine 65 acts as the Nucleophile in catalysis. The N-linked (GlcNAc...) asparagine glycan is linked to asparagine 78. Cysteines 89 and 186 form a disulfide.

The protein belongs to the calycin superfamily. Lipocalin family. In terms of assembly, monomer.

The protein resides in the rough endoplasmic reticulum. The protein localises to the nucleus membrane. It is found in the golgi apparatus. It localises to the cytoplasm. Its subcellular location is the perinuclear region. The protein resides in the secreted. The catalysed reaction is prostaglandin H2 = prostaglandin D2. Functionally, catalyzes the conversion of PGH2 to PGD2, a prostaglandin involved in smooth muscle contraction/relaxation and a potent inhibitor of platelet aggregation. Involved in a variety of CNS functions, such as sedation, NREM sleep and PGE2-induced allodynia, and may have an anti-apoptotic role in oligodendrocytes. Binds small non-substrate lipophilic molecules, including biliverdin, bilirubin, retinal, retinoic acid and thyroid hormone, and may act as a scavenger for harmful hydrophobic molecules and as a secretory retinoid and thyroid hormone transporter. Possibly involved in development and maintenance of the blood-brain, blood-retina, blood-aqueous humor and blood-testis barrier. It is likely to play important roles in both maturation and maintenance of the central nervous system and male reproductive system. Involved in PLA2G3-dependent maturation of mast cells. PLA2G3 is secreted by immature mast cells and acts on nearby fibroblasts upstream to PTDGS to synthesize PGD2, which in turn promotes mast cell maturation and degranulation via PTGDR. The chain is Prostaglandin-H2 D-isomerase (PTGDS) from Gorilla gorilla gorilla (Western lowland gorilla).